A 137-amino-acid chain; its full sequence is Urease subunit beta (137 aa).

Positions 118–137 are disordered; the sequence is IIAEENKVSENANKESGYNR. A compositionally biased stretch (polar residues) spans 126–137; sequence SENANKESGYNR.

This sequence belongs to the urease beta subunit family. As to quaternary structure, heterotrimer of UreA (gamma), UreB (beta) and UreC (alpha) subunits. Three heterotrimers associate to form the active enzyme.

It is found in the cytoplasm. It catalyses the reaction urea + 2 H2O + H(+) = hydrogencarbonate + 2 NH4(+). Its pathway is nitrogen metabolism; urea degradation; CO(2) and NH(3) from urea (urease route): step 1/1. This Staphylococcus xylosus protein is Urease subunit beta.